We begin with the raw amino-acid sequence, 120 residues long: Large ribosomal subunit protein uL22 (120 aa).

This sequence belongs to the universal ribosomal protein uL22 family. As to quaternary structure, part of the 50S ribosomal subunit.

Functionally, this protein binds specifically to 23S rRNA; its binding is stimulated by other ribosomal proteins, e.g. L4, L17, and L20. It is important during the early stages of 50S assembly. It makes multiple contacts with different domains of the 23S rRNA in the assembled 50S subunit and ribosome. Its function is as follows. The globular domain of the protein is located near the polypeptide exit tunnel on the outside of the subunit, while an extended beta-hairpin is found that lines the wall of the exit tunnel in the center of the 70S ribosome. The chain is Large ribosomal subunit protein uL22 from Corynebacterium kroppenstedtii (strain DSM 44385 / JCM 11950 / CIP 105744 / CCUG 35717).